The primary structure comprises 334 residues: G-protein coupled receptor 12 (334 aa).

Topologically, residues 1-48 (MNEDLKVNLSGLPRDYLDAAAAENISAAVSSRVPAVEPEPELVVNPWD) are extracellular. 2 N-linked (GlcNAc...) asparagine glycosylation sites follow: Asn-8 and Asn-24. Residues 49–69 (IVLCTSGTLISCENAIVVLII) form a helical membrane-spanning segment. Topologically, residues 70-77 (FHNPSLRA) are cytoplasmic. Residues 78 to 98 (PMFLLIGSLALADLLAGIGLI) form a helical membrane-spanning segment. The Extracellular portion of the chain corresponds to 99 to 113 (TNFVFAYLLQSEATK). Residues 114–134 (LVTIGLIVASFSASVCSLLAI) traverse the membrane as a helical segment. Over 135–158 (TVDRYLSLYYALTYHSERTVTFTY) the chain is Cytoplasmic. A helical transmembrane segment spans residues 159-179 (VMLVMLWGTSICLGLLPVMGW). Residues 180 to 199 (NCLRDESTCSVVRPLTKNNA) lie on the Extracellular side of the membrane. A helical membrane pass occupies residues 200–220 (AILSVSFLFMFALMLQLYIQI). The Cytoplasmic segment spans residues 221-252 (CKIVMRHAHQIALQHHFLATSHYVTTRKGVST). The chain crosses the membrane as a helical span at residues 253-273 (LAIILGTFAACWMPFTLYSLI). Topologically, residues 274 to 282 (ADYTYPSIY) are extracellular. A helical transmembrane segment spans residues 283–303 (TYATLLPATYNSIINPVIYAF). The Cytoplasmic portion of the chain corresponds to 304 to 334 (RNQEIQKALCLICCGCIPSSLAQRARSPSDV). Cys-317 is lipidated: S-palmitoyl cysteine. Phosphoserine is present on residues Ser-330 and Ser-332.

This sequence belongs to the G-protein coupled receptor 1 family.

Its subcellular location is the cell membrane. In terms of biological role, promotes neurite outgrowth and blocks myelin inhibition in neurons. Receptor with constitutive G(s) signaling activity that stimulates cyclic AMP production. In Homo sapiens (Human), this protein is G-protein coupled receptor 12 (GPR12).